Here is a 647-residue protein sequence, read N- to C-terminus: Calmodulin-binding protein 60 B (647 aa).

The segment covering 1-10 (MMDSGNNNMN) has biased composition (polar residues). Residues 1–26 (MMDSGNNNMNRAKRNLDGNDDDQPER) are disordered. Residues 8 to 85 (NMNRAKRNLD…TGSSGSSPKR (78 aa)) are calmodulin-binding. Residues 12 to 19 (AKRNLDGN) carry the Nuclear localization signal motif. The segment at 155 to 278 (EDDEDWTQEE…AFHKKLTAEG (124 aa)) is DNA-binding.

Belongs to the plant ACBP60 protein family. Interacts with calmodulin (CaM). As to expression, expressed in leaves, stems, flowers, developing seeds and root.

It is found in the nucleus. Functionally, transcription activator that binds DNA in a sequence-specific manner, likely 5'-GAAATTTTGG-3', to promote the expression of target genes. The chain is Calmodulin-binding protein 60 B from Arabidopsis thaliana (Mouse-ear cress).